The sequence spans 276 residues: Large ribosomal subunit protein uL2 (276 aa).

Disordered stretches follow at residues 1-60 (MSIK…RHKR) and 226-276 (NAVD…KRNQ). The segment covering 20 to 31 (SKEEITREEPEK) has biased composition (basic and acidic residues). Basic residues-rich tracts occupy residues 50-60 (STRRQGGRHKR) and 258-276 (KTRRKAKKSDKYIVKKRNQ).

It belongs to the universal ribosomal protein uL2 family. Part of the 50S ribosomal subunit. Forms a bridge to the 30S subunit in the 70S ribosome.

Functionally, one of the primary rRNA binding proteins. Required for association of the 30S and 50S subunits to form the 70S ribosome, for tRNA binding and peptide bond formation. It has been suggested to have peptidyltransferase activity; this is somewhat controversial. Makes several contacts with the 16S rRNA in the 70S ribosome. The chain is Large ribosomal subunit protein uL2 from Natranaerobius thermophilus (strain ATCC BAA-1301 / DSM 18059 / JW/NM-WN-LF).